The sequence spans 181 residues: Keratin-associated protein 4-5 (181 aa).

A run of 26 repeats spans residues 5–9 (CCGSV), 20–24 (CCRPS), 25–29 (CCQTT), 30–34 (CCRTT), 35–39 (CCRPS), 40–44 (CCKPQ), 45–49 (CCQSV), 55–59 (CCHPS), 60–64 (CCISS), 65–69 (CCRPY), 70–74 (CCESS), 75–79 (CCRPC), 80–84 (CCQTT), 85–89 (CCRTT), 90–94 (CCRTT), 95–99 (CCCPS), 100–104 (CCVSS), 105–109 (CCRPQ), 110–114 (CCQSV), 115–119 (CCQPT), 120–124 (CCRPS), 125–129 (CCISS), 130–134 (CCHPS), 135–139 (CCESS), 140–144 (CCRPC), and 145–149 (CCVRP). Residues 5-154 (CCGSVSSEQS…CCVRPVCGRV (150 aa)) are 26 X 5 AA repeats of C-C-[GRQVCHIEK]-[SPTR]-[VSTQYC].

The protein belongs to the KRTAP type 4 family. Interacts with hair keratins. In terms of tissue distribution, expressed in the hair follicles.

Its function is as follows. In the hair cortex, hair keratin intermediate filaments are embedded in an interfilamentous matrix, consisting of hair keratin-associated proteins (KRTAP), which are essential for the formation of a rigid and resistant hair shaft through their extensive disulfide bond cross-linking with abundant cysteine residues of hair keratins. The matrix proteins include the high-sulfur and high-glycine-tyrosine keratins. This Homo sapiens (Human) protein is Keratin-associated protein 4-5 (KRTAP4-5).